Consider the following 554-residue polypeptide: DDB1- and CUL4-associated factor 11 homolog (554 aa).

Positions 24-52 (QRMKNRNDSDTDFSDDDEETSGGCPKMTP) are disordered. Acidic residues predominate over residues 33–43 (DTDFSDDDEET). WD repeat units lie at residues 245 to 284 (QNQC…RIRT), 288 to 328 (AHED…DGDV), 336 to 375 (GHRD…CQGG), 414 to 458 (GHSV…VSRR), and 461 to 500 (GHQA…EGVI). The tract at residues 527 to 554 (PQRKLRKPISARNAKCPTTSSEPDDFQI) is disordered.

The protein belongs to the WD repeat LEC14B family.

Functionally, involved in regulation of lifespan. Required for dopaminergic CEP neuron degeneration in response to Mn(2+). This is DDB1- and CUL4-associated factor 11 homolog (wdr-23) from Caenorhabditis briggsae.